The sequence spans 179 residues: Large ribosomal subunit protein uL6 (179 aa).

It belongs to the universal ribosomal protein uL6 family. As to quaternary structure, part of the 50S ribosomal subunit.

Its function is as follows. This protein binds to the 23S rRNA, and is important in its secondary structure. It is located near the subunit interface in the base of the L7/L12 stalk, and near the tRNA binding site of the peptidyltransferase center. The chain is Large ribosomal subunit protein uL6 from Nocardioides sp. (strain ATCC BAA-499 / JS614).